A 131-amino-acid polypeptide reads, in one-letter code: Ribonuclease VapC42 (131 aa).

Positions 1–125 (MIVDTSAIVA…FRGDDFTHTD (125 aa)) constitute a PINc domain. Mg(2+)-binding residues include Asp4 and Asp100.

This sequence belongs to the PINc/VapC protein family. The cofactor is Mg(2+).

Functionally, toxic component of a type II toxin-antitoxin (TA) system. An RNase. Its cognate antitoxin is VapB42. In Mycobacterium tuberculosis (strain CDC 1551 / Oshkosh), this protein is Ribonuclease VapC42.